The sequence spans 860 residues: Leucine--tRNA ligase (860 aa).

The 'HIGH' region motif lies at 42 to 52 (PYPSGRLHMGH). The short motif at 619 to 623 (KMSKS) is the 'KMSKS' region element. ATP is bound at residue lysine 622.

This sequence belongs to the class-I aminoacyl-tRNA synthetase family.

Its subcellular location is the cytoplasm. The enzyme catalyses tRNA(Leu) + L-leucine + ATP = L-leucyl-tRNA(Leu) + AMP + diphosphate. The sequence is that of Leucine--tRNA ligase from Proteus mirabilis (strain HI4320).